Consider the following 166-residue polypeptide: MRMSTTTEIIAHHWAFAVFLIGAVGLCGLMLLGAYFLGGRAQARAKNVPYESGIDSVGSARMRLSAKFYLVAMFFVIFDVEALYLYAWSISIRESGWIGFIEAAIFILVLLAGLFYLVRIGALDWTPTRSNRRVSKPSTVRYASSHPQDISQELSVAGSQQANESR.

Helical transmembrane passes span 16 to 36 (FAVF…GAYF), 68 to 88 (FYLV…LYAW), and 98 to 118 (IGFI…FYLV). A disordered region spans residues 141 to 166 (RYASSHPQDISQELSVAGSQQANESR).

Belongs to the complex I subunit 3 family. NDH-1 is composed of 13 different subunits. Subunits NuoA, H, J, K, L, M, N constitute the membrane sector of the complex.

It is found in the cell inner membrane. The enzyme catalyses a quinone + NADH + 5 H(+)(in) = a quinol + NAD(+) + 4 H(+)(out). Its function is as follows. NDH-1 shuttles electrons from NADH, via FMN and iron-sulfur (Fe-S) centers, to quinones in the respiratory chain. The immediate electron acceptor for the enzyme in this species is believed to be ubiquinone. Couples the redox reaction to proton translocation (for every two electrons transferred, four hydrogen ions are translocated across the cytoplasmic membrane), and thus conserves the redox energy in a proton gradient. In Yersinia pseudotuberculosis serotype O:1b (strain IP 31758), this protein is NADH-quinone oxidoreductase subunit A.